A 572-amino-acid chain; its full sequence is Phosphoenolpyruvate-protein phosphotransferase (572 aa).

H190 acts as the Tele-phosphohistidine intermediate in catalysis. R297 and R333 together coordinate phosphoenolpyruvate. Positions 432 and 456 each coordinate Mg(2+). Phosphoenolpyruvate is bound by residues 455 to 456 and R466; that span reads ND. C503 serves as the catalytic Proton donor.

This sequence belongs to the PEP-utilizing enzyme family. In terms of assembly, homodimer. It depends on Mg(2+) as a cofactor.

The protein localises to the cytoplasm. It catalyses the reaction L-histidyl-[protein] + phosphoenolpyruvate = N(pros)-phospho-L-histidyl-[protein] + pyruvate. In terms of biological role, general (non sugar-specific) component of the phosphoenolpyruvate-dependent sugar phosphotransferase system (sugar PTS). This major carbohydrate active-transport system catalyzes the phosphorylation of incoming sugar substrates concomitantly with their translocation across the cell membrane. Enzyme I transfers the phosphoryl group from phosphoenolpyruvate (PEP) to the phosphoryl carrier protein (HPr). This Listeria innocua serovar 6a (strain ATCC BAA-680 / CLIP 11262) protein is Phosphoenolpyruvate-protein phosphotransferase (ptsI).